A 719-amino-acid chain; its full sequence is Phosphoribosylformylglycinamidine synthase subunit PurL (719 aa).

Residue His47 is part of the active site. ATP-binding residues include Tyr50 and Lys89. Position 91 (Glu91) interacts with Mg(2+). Substrate-binding positions include 92–95 (SHNH) and Arg114. His93 acts as the Proton acceptor in catalysis. Residue Asp115 coordinates Mg(2+). Gln238 contributes to the substrate binding site. Asp266 lines the Mg(2+) pocket. A substrate-binding site is contributed by 310 to 312 (ESQ). 2 residues coordinate ATP: Asp488 and Gly525. A Mg(2+)-binding site is contributed by Asn526. Ser528 provides a ligand contact to substrate.

Belongs to the FGAMS family. Monomer. Part of the FGAM synthase complex composed of 1 PurL, 1 PurQ and 2 PurS subunits.

It is found in the cytoplasm. It carries out the reaction N(2)-formyl-N(1)-(5-phospho-beta-D-ribosyl)glycinamide + L-glutamine + ATP + H2O = 2-formamido-N(1)-(5-O-phospho-beta-D-ribosyl)acetamidine + L-glutamate + ADP + phosphate + H(+). Its pathway is purine metabolism; IMP biosynthesis via de novo pathway; 5-amino-1-(5-phospho-D-ribosyl)imidazole from N(2)-formyl-N(1)-(5-phospho-D-ribosyl)glycinamide: step 1/2. Its function is as follows. Part of the phosphoribosylformylglycinamidine synthase complex involved in the purines biosynthetic pathway. Catalyzes the ATP-dependent conversion of formylglycinamide ribonucleotide (FGAR) and glutamine to yield formylglycinamidine ribonucleotide (FGAM) and glutamate. The FGAM synthase complex is composed of three subunits. PurQ produces an ammonia molecule by converting glutamine to glutamate. PurL transfers the ammonia molecule to FGAR to form FGAM in an ATP-dependent manner. PurS interacts with PurQ and PurL and is thought to assist in the transfer of the ammonia molecule from PurQ to PurL. The chain is Phosphoribosylformylglycinamidine synthase subunit PurL from Ruegeria pomeroyi (strain ATCC 700808 / DSM 15171 / DSS-3) (Silicibacter pomeroyi).